We begin with the raw amino-acid sequence, 870 residues long: Valine--tRNA ligase (870 aa).

Residues 42-52 carry the 'HIGH' region motif; the sequence is PNVTGVLHIGH. The 'KMSKS' region motif lies at 527 to 531; that stretch reads KMSKS. Lys-530 is an ATP binding site. A coiled-coil region spans residues 800–870; the sequence is LENVDLSGIL…ISVELQNLRG (71 aa).

This sequence belongs to the class-I aminoacyl-tRNA synthetase family. ValS type 1 subfamily. Monomer.

It localises to the cytoplasm. It catalyses the reaction tRNA(Val) + L-valine + ATP = L-valyl-tRNA(Val) + AMP + diphosphate. In terms of biological role, catalyzes the attachment of valine to tRNA(Val). As ValRS can inadvertently accommodate and process structurally similar amino acids such as threonine, to avoid such errors, it has a 'posttransfer' editing activity that hydrolyzes mischarged Thr-tRNA(Val) in a tRNA-dependent manner. The polypeptide is Valine--tRNA ligase (Campylobacter jejuni (strain RM1221)).